The sequence spans 567 residues: Mitochondrial distribution and morphology protein 34 (567 aa).

Residues 1 to 224 (MSFKFNEESF…LPSALFNMSR (224 aa)) enclose the SMP-LTD domain. The span at 392–416 (NKATETSSNLNADSEITPVSSSHNA) shows a compositional bias: polar residues. The segment at 392-453 (NKATETSSNL…NRSSSFTSSI (62 aa)) is disordered. A compositionally biased stretch (low complexity) spans 417 to 452 (TSSVNTITSLTTSSLGSTAGSSNSKNTNRSSSFTSS).

The protein belongs to the MDM34 family. As to quaternary structure, component of the ER-mitochondria encounter structure (ERMES) or MDM complex, composed of MMM1, MDM10, MDM12 and MDM34.

The protein localises to the mitochondrion outer membrane. Component of the ERMES/MDM complex, which serves as a molecular tether to connect the endoplasmic reticulum (ER) and mitochondria. Components of this complex are involved in the control of mitochondrial shape and protein biogenesis, and function in nonvesicular lipid trafficking between the ER and mitochondria. MDM34 is required for the interaction of the ER-resident membrane protein MMM1 and the outer mitochondrial membrane-resident beta-barrel protein MDM10. This is Mitochondrial distribution and morphology protein 34 from Vanderwaltozyma polyspora (strain ATCC 22028 / DSM 70294 / BCRC 21397 / CBS 2163 / NBRC 10782 / NRRL Y-8283 / UCD 57-17) (Kluyveromyces polysporus).